A 257-amino-acid polypeptide reads, in one-letter code: MLALISPAKTLDYETALPTDEFTQPRLLEHSAQLIDVCRKLSASEIASLMSVSEKIATLNADRFRDWKPEFDFSNARQAIYAFKGDVYTGLDAYHLKDKDIDFAQQHLRMLSGLYGLLRPLDLMMPYRLEMGTKLKNTRGHNLYEFWDDIITNRINEDLAAIKSELLVNLASDEYYKSVNEKKIKAEIVKPVFLDQKNGKYKVISFYAKKARGLMARFIIENQLNKAEDIKAFNTEGYYFDADNSSAKELVFKRDEQ.

The protein belongs to the UPF0246 family.

The polypeptide is UPF0246 protein ACICU_02469 (Acinetobacter baumannii (strain ACICU)).